We begin with the raw amino-acid sequence, 614 residues long: Subtilin transport ATP-binding protein SpaT (614 aa).

5 consecutive transmembrane segments (helical) span residues 34–54 (FLKL…SLYI), 69–89 (VSIV…SELI), 147–167 (IIQA…SIAF), 175–195 (VSLL…KIGQ), and 267–287 (IAVQ…AFAG). An ABC transmembrane type-1 domain is found at 34 to 320 (FLKLIRFSII…IMTSIYSIYN (287 aa)). Positions 353 to 593 (VVFQNVSFIY…CPLYKKMDES (241 aa)) constitute an ABC transporter domain. 387–394 (GPNGSGKK) serves as a coordination point for ATP.

It belongs to the ABC transporter superfamily.

It localises to the cell membrane. Probably implicated in the export process of the lantibiotic subtilin. The protein is Subtilin transport ATP-binding protein SpaT (spaT) of Bacillus subtilis.